The following is a 218-amino-acid chain: MATISAVQVEFLEFPAVVTSPASGKTYFLGGAGERGLTIEGKFIKFTGIGVYLEDKAVPSLAAKWKGKTSEELVHTLHFYRDIISGPFEKLIRGSKILPLAGAEYSKKVMENCVAHMKSVGTYGDAEAAAIEKFAEAFKNVNFAPGASVFYRQSPDGILGLSFSEDATIPEKEAAVIENKAVSAAVLETMIGEHAVSPDLKRSLASRLPAVLSHGIIV.

The substrate site is built by threonine 47, asparagine 112, and threonine 189.

It belongs to the chalcone isomerase family. As to expression, expressed in roots, shoots, flowers and seeds.

The catalysed reaction is a chalcone = a flavanone.. Its pathway is secondary metabolite biosynthesis; flavonoid biosynthesis. Functionally, catalyzes the intramolecular cyclization of bicyclic chalcones into tricyclic (S)-flavanones. Responsible for the isomerization of 4,2',4',6'-tetrahydroxychalcone (also termed chalcone) into naringenin. The sequence is that of Chalcone--flavanone isomerase 1A (CHI1A) from Glycine max (Soybean).